The chain runs to 700 residues: MPRQLFVTTALPYANGNFHIGHIMEYIQADIWVRYQRMMGNAVHFVCADDCHGAPIMIAAEKVGKTPQQFVADIASGRKPYLDGFHIGFDNWHSTDGAENHELAQAIYRDLKAAGLISTRVIAQFFDTEKNMFLPDRFIKGECPKCGAKDQYGDNCEECGAVYSPTELKNPYSALSGVTPVLRDSEHYFFKLSDPRCVEFLEQWTTDTNPRGQSRLQAEVYNKIKEWLLPDAEGKRDLGDWDISRDAPYFGIEIPDAPGKYFYVWLDAPIGYLAALKNRFIKLAGDATTGAQHYDDFMADPATEQYHFIGKDIITFHTLFWPAMLHFSGRKTPNAVFVHGFLTVNSEKMSKSRGTGLDPLKYLSLGMNPEWLRYYLATKLTARNEDVEFSPEDFMARVNSDLVGKYINIASRAAGFIAKRFGGQLGVISDDGAALLKQIQIERTSIEQLYEAREFAKALRETMLLADRVNEYVDANKPWELAKQTGMETRLHDVCTVCIEAFRALTAYLKPVLPLLAAQVEVFLNIEPLSFASVSQTLGAVHRIGDYKHLMQRVDIKQLEALFEAQAPVEPDNIATESVAPGGEGMAPVISMDDFSKIDLRIAKIVNCETVSGSTKLLRLTLDVGETNTRNVFSGIASSYQPEQLIGKLTVMVANLAPRKMKFGISDGMVLAASHADEKAQPGIYILEPFAGAQPGMRVH.

The short motif at 12–22 is the 'HIGH' region element; that stretch reads PYANGNFHIGH. 4 residues coordinate Zn(2+): Cys143, Cys146, Cys156, and Cys159. The 'KMSKS' region signature appears at 348-352; that stretch reads KMSKS. Lys351 contributes to the ATP binding site. In terms of domain architecture, tRNA-binding spans 594–700; sequence DFSKIDLRIA…AGAQPGMRVH (107 aa).

This sequence belongs to the class-I aminoacyl-tRNA synthetase family. MetG type 1 subfamily. Homodimer. Zn(2+) is required as a cofactor.

Its subcellular location is the cytoplasm. It catalyses the reaction tRNA(Met) + L-methionine + ATP = L-methionyl-tRNA(Met) + AMP + diphosphate. In terms of biological role, is required not only for elongation of protein synthesis but also for the initiation of all mRNA translation through initiator tRNA(fMet) aminoacylation. The sequence is that of Methionine--tRNA ligase from Albidiferax ferrireducens (strain ATCC BAA-621 / DSM 15236 / T118) (Rhodoferax ferrireducens).